The chain runs to 96 residues: UPF0235 protein VC0395_A0010/VC395_0502 (96 aa).

This sequence belongs to the UPF0235 family.

This chain is UPF0235 protein VC0395_A0010/VC395_0502, found in Vibrio cholerae serotype O1 (strain ATCC 39541 / Classical Ogawa 395 / O395).